The chain runs to 163 residues: tRNA-acetylating toxin 2 (163 aa).

Leu-89, Val-91, His-96, Gly-97, Gln-98, Gly-99, Ala-101, Arg-102, and Glu-132 together coordinate acetyl-CoA. Tyr-137 is an active-site residue. Acetyl-CoA is bound at residue Arg-139.

This sequence belongs to the acetyltransferase family. GNAT subfamily. In terms of assembly, homodimer (in absence of antitoxin). Forms a complex with cognate antitoxin TacA2. Forms a 4:2 antitoxin:toxin complex with cognate antitoxin TacA2.

It carries out the reaction glycyl-tRNA(Gly) + acetyl-CoA = N-acetylglycyl-tRNA(Gly) + CoA + H(+). In terms of biological role, toxic component of a type II toxin-antitoxin (TA) system. Acetylates tRNA and inhibits translation. Acetylates exclusively Gly in situ. Overexpression during the lag phase of a tacA2-tacT2 deletion strain leads to very small increase in persister cells in the presence of cefotaxime but no detectable growth phenotype in absence of antibiotics. Compared to a protein with a single amino acid change (TacT2 from S.enterica NCTC 13349, Glu-29 is Lys in NCTC 13349) this protein binds tRNA very poorly and acetylates tRNA very poorly. Persister cell formation is neutralized by cognate antitoxin TacA2. Neutralized only by cognate antitoxin TacA2 (A8), but not by TacA1 or TacA3. Plays a role in persister cell formation. The TacA2-TacT2 complex both represses and derepresses expression of its own operon. In Salmonella typhimurium (strain 14028s / SGSC 2262), this protein is tRNA-acetylating toxin 2.